Here is a 566-residue protein sequence, read N- to C-terminus: Phosphatidylinositol 4-kinase gamma 4 (566 aa).

Ubiquitin-like domains follow at residues 34–111 and 112–190; these read TIMI…SDLQ and VLDV…AKVR. A compositionally biased stretch (polar residues) spans 250–263; it reads DGLKSGNSPVRSSE. The interval 250–272 is disordered; that stretch reads DGLKSGNSPVRSSEGTGGAYFMQ. The 293-residue stretch at 255 to 547 folds into the PI3K/PI4K catalytic domain; the sequence is GNSPVRSSEG…AVLPGTSEAA (293 aa). Positions 261–267 are G-loop; sequence SSEGTGG. ATP is bound by residues 262-268, Lys284, and 374-377; these read SEGTGGA and QMFT. Residues 407-415 are catalytic loop; the sequence is ANADRHGGN. The tract at residues 430 to 456 is activation loop; the sequence is PIDHGYCLPESFEDCTFEWLYWPQARK. An ATP-binding site is contributed by Asp432.

This sequence belongs to the PI3/PI4-kinase family. Type II PI4K subfamily. As to quaternary structure, interacts with RPN10, UFD1 and CDC48 in vitro. In terms of processing, autophosphorylated.

The protein localises to the membrane. The enzyme catalyses a 1,2-diacyl-sn-glycero-3-phospho-(1D-myo-inositol) + ATP = a 1,2-diacyl-sn-glycero-3-phospho-(1D-myo-inositol 4-phosphate) + ADP + H(+). The phosphorylation of phosphatidylinositol (PI) to PI4P is the first committed step in the generation of phosphatidylinositol 4,5-bisphosphate (PIP2), a precursor of the second messenger inositol 1,4,5-trisphosphate (InsP3). Undergoes autophosphorylation and phosphorylates serine/threonine residues of protein substrates. Phosphorylates RPN10 and UFD1 in vitro. This is Phosphatidylinositol 4-kinase gamma 4 from Arabidopsis thaliana (Mouse-ear cress).